Here is a 438-residue protein sequence, read N- to C-terminus: Putative hydrolase MSMEG_3995/MSMEI_3903 (438 aa).

Residues D95, D104, E143, and H208 each coordinate Zn(2+). K217 participates in a covalent cross-link: Isoglutamyl lysine isopeptide (Lys-Gln) (interchain with Q-Cter in protein Pup). H400 serves as a coordination point for Zn(2+).

It belongs to the peptidase M20 family. It depends on Zn(2+) as a cofactor.

This chain is Putative hydrolase MSMEG_3995/MSMEI_3903, found in Mycolicibacterium smegmatis (strain ATCC 700084 / mc(2)155) (Mycobacterium smegmatis).